The following is a 785-amino-acid chain: AP-1 complex subunit gamma-like 2 (785 aa).

The interval 369–379 is essential for ubiquitin-binding; sequence LSLALVNSSNV. The segment at 592-617 is disordered; sequence GPQADEEAKESKEAAQLSEAAPVPTE. Residues 665 to 780 enclose the GAE domain; it reads APIPDLKVFE…QEIFEVNNLP (116 aa).

Belongs to the adaptor complexes large subunit family. In terms of assembly, may interact with AP1S1/Sigma1A-adaptin and AP1S2/Sigma1B-adaptin. Probably does not interact with APB1. Interacts (via GAE domain) with RABEP1, NECAP1, CLINT1 and AFTPH/aftiphilin. As to quaternary structure, (Microbial infection) Interacts with HBV major surface antigen L. Interacts with HBV core protein C in a ubiquitin-dependent manner. As to expression, expressed in all but one (skeletal muscle) tissues examined.

It localises to the golgi apparatus membrane. The protein resides in the cytoplasmic vesicle membrane. Its subcellular location is the endosome membrane. In terms of biological role, may function in protein sorting in late endosomes or multivesucular bodies (MVBs). Functionally, (Microbial infection) Involved in MVB-assisted maturation of hepatitis B virus (HBV). The protein is AP-1 complex subunit gamma-like 2 (AP1G2) of Homo sapiens (Human).